A 430-amino-acid polypeptide reads, in one-letter code: Adenylosuccinate synthetase (430 aa).

GTP contacts are provided by residues Gly-12 to Lys-18 and Gly-40 to Thr-42. The Proton acceptor role is filled by Asp-13. Positions 13 and 40 each coordinate Mg(2+). Residues Asp-13–Lys-16, Asn-38–His-41, Thr-128, Arg-142, Gln-223, Thr-238, and Arg-302 contribute to the IMP site. Catalysis depends on His-41, which acts as the Proton donor. Substrate is bound at residue Thr-298–Arg-304. GTP is bound by residues Arg-304, Ser-330–Asp-332, and Ser-413–Gly-415.

This sequence belongs to the adenylosuccinate synthetase family. In terms of assembly, homodimer. The cofactor is Mg(2+).

The protein resides in the cytoplasm. The enzyme catalyses IMP + L-aspartate + GTP = N(6)-(1,2-dicarboxyethyl)-AMP + GDP + phosphate + 2 H(+). It participates in purine metabolism; AMP biosynthesis via de novo pathway; AMP from IMP: step 1/2. Functionally, plays an important role in the de novo pathway of purine nucleotide biosynthesis. Catalyzes the first committed step in the biosynthesis of AMP from IMP. This Lactococcus lactis subsp. cremoris (strain SK11) protein is Adenylosuccinate synthetase.